Here is a 156-residue protein sequence, read N- to C-terminus: Ribosome maturation factor RimP (156 aa).

This sequence belongs to the RimP family.

It is found in the cytoplasm. Required for maturation of 30S ribosomal subunits. This Shouchella clausii (strain KSM-K16) (Alkalihalobacillus clausii) protein is Ribosome maturation factor RimP.